A 206-amino-acid polypeptide reads, in one-letter code: ATP phosphoribosyltransferase (206 aa).

Belongs to the ATP phosphoribosyltransferase family. Short subfamily. In terms of assembly, heteromultimer composed of HisG and HisZ subunits.

Its subcellular location is the cytoplasm. It catalyses the reaction 1-(5-phospho-beta-D-ribosyl)-ATP + diphosphate = 5-phospho-alpha-D-ribose 1-diphosphate + ATP. It functions in the pathway amino-acid biosynthesis; L-histidine biosynthesis; L-histidine from 5-phospho-alpha-D-ribose 1-diphosphate: step 1/9. Its function is as follows. Catalyzes the condensation of ATP and 5-phosphoribose 1-diphosphate to form N'-(5'-phosphoribosyl)-ATP (PR-ATP). Has a crucial role in the pathway because the rate of histidine biosynthesis seems to be controlled primarily by regulation of HisG enzymatic activity. The protein is ATP phosphoribosyltransferase of Campylobacter curvus (strain 525.92).